We begin with the raw amino-acid sequence, 667 residues long: DNA ligase (667 aa).

NAD(+) is bound by residues 32 to 36 (DSVYD), 81 to 82 (SL), and glutamate 111. Residue lysine 113 is the N6-AMP-lysine intermediate of the active site. NAD(+) is bound by residues arginine 134, glutamate 168, lysine 285, and lysine 309. Zn(2+) is bound by residues cysteine 403, cysteine 406, cysteine 421, and cysteine 426. A BRCT domain is found at 588-667 (VGDNPFAGKT…DNLIEQLNLI (80 aa)).

Belongs to the NAD-dependent DNA ligase family. LigA subfamily. It depends on Mg(2+) as a cofactor. The cofactor is Mn(2+).

The enzyme catalyses NAD(+) + (deoxyribonucleotide)n-3'-hydroxyl + 5'-phospho-(deoxyribonucleotide)m = (deoxyribonucleotide)n+m + AMP + beta-nicotinamide D-nucleotide.. Its function is as follows. DNA ligase that catalyzes the formation of phosphodiester linkages between 5'-phosphoryl and 3'-hydroxyl groups in double-stranded DNA using NAD as a coenzyme and as the energy source for the reaction. It is essential for DNA replication and repair of damaged DNA. This is DNA ligase from Lysinibacillus sphaericus (strain C3-41).